The chain runs to 219 residues: Octanoyltransferase (219 aa).

In terms of domain architecture, BPL/LPL catalytic spans 32-207 (ASSPDQLWIV…TFSHNLGYQN (176 aa)). Substrate contacts are provided by residues 71-78 (RGGQVTYH), 138-140 (SLG), and 151-153 (GLA). Cys169 functions as the Acyl-thioester intermediate in the catalytic mechanism.

It belongs to the LipB family.

Its subcellular location is the cytoplasm. It catalyses the reaction octanoyl-[ACP] + L-lysyl-[protein] = N(6)-octanoyl-L-lysyl-[protein] + holo-[ACP] + H(+). It participates in protein modification; protein lipoylation via endogenous pathway; protein N(6)-(lipoyl)lysine from octanoyl-[acyl-carrier-protein]: step 1/2. Catalyzes the transfer of endogenously produced octanoic acid from octanoyl-acyl-carrier-protein onto the lipoyl domains of lipoate-dependent enzymes. Lipoyl-ACP can also act as a substrate although octanoyl-ACP is likely to be the physiological substrate. In Shewanella sediminis (strain HAW-EB3), this protein is Octanoyltransferase.